We begin with the raw amino-acid sequence, 235 residues long: RNA polymerase sigma factor SigI7 (235 aa).

The short motif at 49 to 62 is the Polymerase core binding element; sequence DELSIALMAFVETI. A DNA-binding region (H-T-H motif) is located at residues 191 to 210; it reads VAEIEQSLKIPRKTIERARK.

Belongs to the sigma-70 factor family. SigI subfamily. Interacts with RsgI7.

The protein localises to the cytoplasm. Negatively regulated by the anti-sigma-I factor RsgI7. Its function is as follows. Sigma factors are initiation factors that promote the attachment of RNA polymerase to specific initiation sites and are then released. The chain is RNA polymerase sigma factor SigI7 from Acetivibrio thermocellus (strain ATCC 27405 / DSM 1237 / JCM 9322 / NBRC 103400 / NCIMB 10682 / NRRL B-4536 / VPI 7372) (Clostridium thermocellum).